Here is a 421-residue protein sequence, read N- to C-terminus: MWYHKLLHQQSRLQNLMKRGDIAHGLRLSGFKSLFPFSLHWCHTASKSVNCTWHQHEDHLELQYASTVMRFDYVWLRDHCRSASCYNSKTHQRSLDTASVDLCIKPKTIRLDESTLFFTWPDGHVTRYDLDWLVKNSYEGQKQEVIQPRVLWNAKLYQDAQLPSVDFQGFLETKEGLKKFLQNFLLYGIAFVENVPPTQEHTEKLARRVSLIRETIYGRMWYFTSDFSRGDTAYTKLALDRHTDTTYFQEPCGIQVFHCLKHEGTGGRTLLVDGFYAAQQVLQRAPEEFDLLSQVPLKHEYIENVGQCHNHMIGVGPILNIYPWNKELYLIRYNNYDRAVINTVPYDVVRRWYAAHRTLTTELRRPENELWVKLKPGKVLFIDNWRVLHGRESFTGYRQLCGCYLTRDDVLNTARILGLHA.

The transit peptide at Met1 to Asn15 directs the protein to the mitochondrion. 2 positions are modified to N6-acetyllysine: Lys179 and Lys236. Residues His242, Asp244, and His389 each contribute to the Fe cation site.

The protein belongs to the gamma-BBH/TMLD family. Homodimer. Fe(2+) serves as cofactor. L-ascorbate is required as a cofactor.

It is found in the mitochondrion matrix. It catalyses the reaction N(6),N(6),N(6)-trimethyl-L-lysine + 2-oxoglutarate + O2 = (3S)-3-hydroxy-N(6),N(6),N(6)-trimethyl-L-lysine + succinate + CO2. The protein operates within amine and polyamine biosynthesis; carnitine biosynthesis. Converts trimethyllysine (TML) into hydroxytrimethyllysine (HTML). This is Trimethyllysine dioxygenase, mitochondrial (Tmlhe) from Rattus norvegicus (Rat).